The following is a 144-amino-acid chain: Actin-associated protein FAM107A (144 aa).

Residues 70-90 adopt a coiled-coil conformation; that stretch reads VLEHRRRNQLIKKKEEELEAK. The Nuclear localization signal motif lies at 74-84; it reads RRRNQLIKKKE. A disordered region spans residues 104–123; sequence QQRLNQLENPPQRDEDHAPE. Basic and acidic residues predominate over residues 114–123; that stretch reads PQRDEDHAPE.

As to quaternary structure, interacts with ACTB. Interacts with F-actin. Interacts with PRDX1. Interacts with COMMD1; this interaction stabilizes COMMD1 in the nucleus. Interacts with MAP1A. In terms of tissue distribution, expressed in septum, the neocortex, the CA3 region of the hippocampus and the cerebellum (at protein level).

The protein localises to the nucleus. It is found in the cytoplasm. It localises to the cytoskeleton. The protein resides in the stress fiber. Its subcellular location is the cell junction. The protein localises to the focal adhesion. It is found in the cell projection. It localises to the ruffle membrane. The protein resides in the synapse. Functionally, stress-inducible actin-binding protein that plays a role in synaptic and cognitive functions by modulating actin filamentous (F-actin) dynamics. Mediates polymerization of globular actin to F-actin. Also binds to, stabilizes and bundles F-actin. Involved in synaptic function by regulating neurite outgrowth in an actin-dependent manner and for the acquisition of hippocampus-dependent cognitive function, such as learning and long-term memory. Plays a role in the actin and microtubule cytoskeleton organization; negatively regulates focal adhesion (FA) assembly promoting malignant glial cell migration in an actin-, microtubule- and MAP1A-dependent manner. Also involved in neuroblastoma G1/S phase cell cycle progression and cell proliferation inhibition by stimulating ubiquitination of NF-kappa-B subunit RELA and NF-kappa-B degradation in a COMMD1- and actin-dependent manner. May play a role in tumor development. This Mus musculus (Mouse) protein is Actin-associated protein FAM107A.